Consider the following 1121-residue polypeptide: CRISPR-associated endonuclease Cas9 1 (1121 aa).

The active-site For RuvC-like nuclease domain is the D9. Residues D9, E509, and E513 each coordinate Mg(2+). Residues 516 to 684 (EDDEKKAIQK…VRKKFIERNL (169 aa)) form the HNH Cas9-type domain. H599 serves as the catalytic Proton acceptor for HNH nuclease domain. H738 serves as a coordination point for Mg(2+).

It belongs to the CRISPR-associated protein Cas9 family. Subtype II-A subfamily. As to quaternary structure, monomer. Binds crRNA and tracrRNA. Mg(2+) is required as a cofactor.

Its function is as follows. CRISPR (clustered regularly interspaced short palindromic repeat) is an adaptive immune system that provides protection against mobile genetic elements (viruses, transposable elements and conjugative plasmids). CRISPR clusters contain spacers, sequences complementary to antecedent mobile elements, and target invading nucleic acids. CRISPR clusters are transcribed and processed into CRISPR RNA (crRNA). In type II CRISPR systems correct processing of pre-crRNA requires a trans-encoded small RNA (tracrRNA), endogenous ribonuclease 3 (rnc) and this protein. The tracrRNA serves as a guide for ribonuclease 3-aided processing of pre-crRNA. Subsequently Cas9/crRNA/tracrRNA endonucleolytically cleaves linear or circular dsDNA target complementary to the spacer; Cas9 is inactive in the absence of the 2 guide RNAs (gRNA). Cas9 recognizes the protospacer adjacent motif (PAM) in the CRISPR repeat sequences to help distinguish self versus nonself, as targets within the bacterial CRISPR locus do not have PAMs. PAM recognition is also required for catalytic activity. Cuts target DNA when Cas9 and gRNAs are mixed. The chain is CRISPR-associated endonuclease Cas9 1 from Streptococcus thermophilus (strain ATCC BAA-491 / LMD-9).